Consider the following 400-residue polypeptide: Nicotinate phosphoribosyltransferase (400 aa).

A Phosphohistidine; by autocatalysis modification is found at His-220.

The protein belongs to the NAPRTase family. Post-translationally, transiently phosphorylated on a His residue during the reaction cycle. Phosphorylation strongly increases the affinity for substrates and increases the rate of nicotinate D-ribonucleotide production. Dephosphorylation regenerates the low-affinity form of the enzyme, leading to product release.

It catalyses the reaction nicotinate + 5-phospho-alpha-D-ribose 1-diphosphate + ATP + H2O = nicotinate beta-D-ribonucleotide + ADP + phosphate + diphosphate. Its pathway is cofactor biosynthesis; NAD(+) biosynthesis; nicotinate D-ribonucleotide from nicotinate: step 1/1. In terms of biological role, catalyzes the synthesis of beta-nicotinate D-ribonucleotide from nicotinate and 5-phospho-D-ribose 1-phosphate at the expense of ATP. In Salmonella typhi, this protein is Nicotinate phosphoribosyltransferase.